The chain runs to 130 residues: Small ribosomal subunit protein uS8 (130 aa).

The protein belongs to the universal ribosomal protein uS8 family. Part of the 30S ribosomal subunit. Contacts proteins S5 and S12.

One of the primary rRNA binding proteins, it binds directly to 16S rRNA central domain where it helps coordinate assembly of the platform of the 30S subunit. This is Small ribosomal subunit protein uS8 from Pseudomonas aeruginosa (strain UCBPP-PA14).